We begin with the raw amino-acid sequence, 253 residues long: Ribonuclease HII (253 aa).

Residues 30-221 form the RNase H type-2 domain; that stretch reads GPVAGVDEVG…VRRLVVDGEP (192 aa). A divalent metal cation-binding residues include D36, E37, and D130.

It belongs to the RNase HII family. It depends on Mn(2+) as a cofactor. Requires Mg(2+) as cofactor.

The protein localises to the cytoplasm. The enzyme catalyses Endonucleolytic cleavage to 5'-phosphomonoester.. Endonuclease that specifically degrades the RNA of RNA-DNA hybrids. This is Ribonuclease HII from Mycolicibacterium gilvum (strain PYR-GCK) (Mycobacterium gilvum (strain PYR-GCK)).